Here is a 344-residue protein sequence, read N- to C-terminus: GTPase Obg (344 aa).

The span at 1-12 (MFVDSASFSVSS) shows a compositional bias: polar residues. Residues 1 to 36 (MFVDSASFSVSSGKGGPGCASFRREKHVPLGGPDGG) form a disordered region. An Obg domain is found at 1–158 (MFVDSASFSV…RNIRLELKLI (158 aa)). The OBG-type G domain maps to 159 to 341 (ADVGLVGFPN…LKFGLLEILK (183 aa)). Residues 165–172 (GFPNVGKS), 190–194 (FTTLT), 212–215 (DIPG), 280–283 (TRLD), and 322–324 (SSV) contribute to the GTP site. Residues Ser172 and Thr192 each coordinate Mg(2+).

This sequence belongs to the TRAFAC class OBG-HflX-like GTPase superfamily. OBG GTPase family. As to quaternary structure, monomer. Mg(2+) is required as a cofactor.

The protein resides in the cytoplasm. An essential GTPase which binds GTP, GDP and possibly (p)ppGpp with moderate affinity, with high nucleotide exchange rates and a fairly low GTP hydrolysis rate. Plays a role in control of the cell cycle, stress response, ribosome biogenesis and in those bacteria that undergo differentiation, in morphogenesis control. This is GTPase Obg from Campylobacter fetus subsp. fetus (strain 82-40).